The primary structure comprises 639 residues: Serine/threonine-protein kinase PAK mbt (639 aa).

A CRIB domain is found at 11–24 (ISMPSNFEHRVHTG). Residues 25–367 (FDKRENKYVG…VVSAGDPREN (343 aa)) are linker. 2 disordered regions span residues 79–195 (HHNN…SLLY) and 222–345 (RSNL…QDQR). 4 stretches are compositionally biased toward low complexity: residues 91–129 (NSSSTMMMGSMAPMNPMAPGAHPMMSHGPGMMMPPETGG), 138–159 (VARSNSLRSSSPPRVRRVANVP), 227–241 (PPSGGSMPQQQQTSP), and 274–295 (QQQQQQQQQAKQGGDQNQNPLH). The span at 296-308 (PHAHPHPHHHQHL) shows a compositional bias: basic residues. Low complexity predominate over residues 309-331 (AKSASRASSSSGGASSAAQQASG). A Protein kinase domain is found at 368 to 619 (LDHFNKIGEG…AAELLAHPFL (252 aa)). ATP-binding positions include 374–382 (IGEGSTGTV) and K397. D487 serves as the catalytic Proton acceptor. S521 is subject to Phosphoserine. Position 525 is a phosphothreonine (T525).

The protein belongs to the protein kinase superfamily. STE Ser/Thr protein kinase family. STE20 subfamily. As to quaternary structure, interacts tightly with GTP-bound but not GDP-bound Cdc42 and weakly with Rac1. The cofactor is Mg(2+). In terms of processing, autophosphorylated when activated by Cdc42. Expressed in adult brain and eye. High levels detected in developing photoreceptor cells and future bristle cells, and lower levels in cone and pigment cells, as detected in third instar eye imaginal disks (at protein level).

The protein localises to the cell junction. It localises to the adherens junction. The protein resides in the cell membrane. The catalysed reaction is L-seryl-[protein] + ATP = O-phospho-L-seryl-[protein] + ADP + H(+). The enzyme catalyses L-threonyl-[protein] + ATP = O-phospho-L-threonyl-[protein] + ADP + H(+). In terms of biological role, involved in neurogenesis of the adult central nervous system, and together with Cdc42, regulates photoreceptor cell morphogenesis. Phosphorylates exogenous substrates when activated by Cdc42. This Drosophila melanogaster (Fruit fly) protein is Serine/threonine-protein kinase PAK mbt.